Reading from the N-terminus, the 102-residue chain is Putative pterin-4-alpha-carbinolamine dehydratase (102 aa).

Belongs to the pterin-4-alpha-carbinolamine dehydratase family.

The enzyme catalyses (4aS,6R)-4a-hydroxy-L-erythro-5,6,7,8-tetrahydrobiopterin = (6R)-L-erythro-6,7-dihydrobiopterin + H2O. The protein is Putative pterin-4-alpha-carbinolamine dehydratase of Burkholderia ambifaria (strain ATCC BAA-244 / DSM 16087 / CCUG 44356 / LMG 19182 / AMMD) (Burkholderia cepacia (strain AMMD)).